Here is a 211-residue protein sequence, read N- to C-terminus: Large ribosomal subunit protein uL3 (211 aa).

The tract at residues 125–148 is disordered; sequence GPASHGSKKWHRRPGSIGQRKTPG.

It belongs to the universal ribosomal protein uL3 family. As to quaternary structure, part of the 50S ribosomal subunit. Forms a cluster with proteins L14 and L19. Also contacts proteins L13 and L17.

In terms of biological role, one of the primary rRNA binding proteins, it binds directly near the 3'-end of the 23S rRNA, where it nucleates assembly of the 50S subunit. In Deinococcus radiodurans (strain ATCC 13939 / DSM 20539 / JCM 16871 / CCUG 27074 / LMG 4051 / NBRC 15346 / NCIMB 9279 / VKM B-1422 / R1), this protein is Large ribosomal subunit protein uL3 (rplC).